The following is a 151-amino-acid chain: Putative pre-16S rRNA nuclease (151 aa).

It belongs to the YqgF nuclease family.

The protein resides in the cytoplasm. Could be a nuclease involved in processing of the 5'-end of pre-16S rRNA. This is Putative pre-16S rRNA nuclease from Prochlorococcus marinus (strain MIT 9515).